The following is a 367-amino-acid chain: Forkhead box protein I1-B (367 aa).

Disordered stretches follow at residues 1–21 (MNPV…HLPH) and 213–274 (DNGN…PPTV). The fork-head DNA-binding region spans 128 to 222 (RPPYSYSALI…DNGNFRRKRK (95 aa)). Over residues 233 to 246 (AKRDEDHLNPKGKE) the composition is skewed to basic and acidic residues. Positions 252–274 (TPSSSPEVLSPTGHSKSPSPPTV) are enriched in polar residues.

As to expression, initially localized to the animal hemisphere (the presumptive ectoderm) of early-mid blastula embryos. Becomes restricted to head placodes, excluding the otic placodes, by the tailbud stages.

Its subcellular location is the nucleus. Its function is as follows. Transcription factor. Essential for ventral specification of the early cephalic (head) ectoderm during gastrulation, playing a role in the 'non-neural' versus 'neural' cell fate choice. Binds to DNA via the target sequence 5'-[AG]TAAA[CT]A-3', with 5'-ATAAACA-3' being the preferred binding site. This is Forkhead box protein I1-B (foxi1-b) from Xenopus laevis (African clawed frog).